The sequence spans 465 residues: GTPase Der (465 aa).

EngA-type G domains lie at 3 to 166 and 184 to 358; these read FLVA…LNEY and IHFS…ACAN. Residues 9-16, 56-60, 118-121, 190-197, 237-241, and 302-305 contribute to the GTP site; these read GRANVGKS, DTGGI, NKVD, GRPNVGKS, DTAGV, and NKWD. The KH-like domain maps to 359–443; sequence KKITTADATR…PIVFEFKQSE (85 aa). A disordered region spans residues 446-465; that stretch reads FADRKNKRSKDEGSKSKKVK.

Belongs to the TRAFAC class TrmE-Era-EngA-EngB-Septin-like GTPase superfamily. EngA (Der) GTPase family. In terms of assembly, associates with the 50S ribosomal subunit.

Functionally, GTPase that plays an essential role in the late steps of ribosome biogenesis. The polypeptide is GTPase Der (Francisella tularensis subsp. holarctica (strain FTNF002-00 / FTA)).